The following is a 286-amino-acid chain: Transcription initiation factor IIA large subunit (286 aa).

3 disordered regions span residues 120–145 (NTVEATNNSGATLNTNTSGNTNADVT), 167–195 (TVENIDDESEKKDDEEKEEDVEKTRKEKE), and 208–236 (KRSALLDTDEVGSELDDSDDDYLISEGEE). Basic and acidic residues predominate over residues 175–195 (SEKKDDEEKEEDVEKTRKEKE). The segment covering 214–236 (DTDEVGSELDDSDDDYLISEGEE) has biased composition (acidic residues).

The protein belongs to the TFIIA subunit 1 family. TFIIA is a heterodimer composed of the large TOA1 and a small TOA2 subunits. Interacts with KAP122.

It is found in the cytoplasm. It localises to the nucleus. In terms of biological role, TFIIA is a component of the transcription machinery of RNA polymerase II and implicated in the regulation of basal transcription. Interacts with TBP (the TATA-binding protein). This Saccharomyces cerevisiae (strain ATCC 204508 / S288c) (Baker's yeast) protein is Transcription initiation factor IIA large subunit (TOA1).